We begin with the raw amino-acid sequence, 397 residues long: MVVFSQVTVALTCFSAIASAAAVRQEPPQGFTVNQVQKAVPGTRTVNLPGLYANALVKYGATVPATVHAAAVSGSAITTPEADDVEYLTPVTIGSSTLNLDFDTGSADLWVFSSELTSSQQSGHDVYNVGSLGTKLSGASWSISYGDGSSASGDVYKDTVTVGGVKATGQAVEAAKKISSQFLQDKNNDGLLGMAFSSINTVSPTPQKTFFDTVKSSLGEPLFAVTLQGTGRPWHLRFGYIDSDKYTGTLAYADVDDSDGFWSFTADSYKIGTGAAGKSITGIADTGTTLLLLDSSIVTGLLQEGYPGSQNSSSAGGYIFPCSATLPDFTVTINGYDAVVPGKYINFAPVSTGSSSCYGGIQSNSGIGFSIFGDIFLKSQYVVFDSEGPRLGFAAQA.

Positions 1 to 20 (MVVFSQVTVALTCFSAIASA) are cleaved as a signal peptide. A propeptide spans 21-71 (AAVRQEPPQGFTVNQVQKAVPGTRTVNLPGLYANALVKYGATVPATVHAAA) (activation peptide). The Peptidase A1 domain occupies 87 to 394 (YLTPVTIGSS…DSEGPRLGFA (308 aa)). Catalysis depends on residues aspartate 103 and aspartate 285. N-linked (GlcNAc...) asparagine glycosylation occurs at asparagine 311. Cysteine 322 and cysteine 357 are oxidised to a cystine.

The protein belongs to the peptidase A1 family. In terms of assembly, monomer.

It localises to the secreted. It catalyses the reaction Hydrolysis of proteins with broad specificity similar to that of pepsin A, preferring hydrophobic residues at P1 and P1', but also cleaving 20-Gly-|-Glu-21 in the B chain of insulin. Clots milk, and activates trypsinogen.. Secreted aspartic endopeptidase that allows assimilation of proteinaceous substrates. The scissile peptide bond is attacked by a nucleophilic water molecule activated by two aspartic residues in the active site. Shows a broad primary substrate specificity. Favors hydrophobic residues at the P1 and P1' positions, but can also activate trypsinogen and hydrolyze the B chain of insulin between positions 'Gly-20' and 'Glu-21'. This is Penicillopepsin-1 from Penicillium roqueforti.